Consider the following 261-residue polypeptide: Cytochrome c oxidase subunit 3 (261 aa).

At 1–15 (MTHQAHAYHMVDPSP) the chain is on the mitochondrial matrix side. The helical transmembrane segment at 16 to 34 (WPLTGAVAALLMTSGLAVW) threads the bilayer. At 35 to 40 (FHFHST) the chain is on the mitochondrial intermembrane side. A helical transmembrane segment spans residues 41–66 (TLMALGTVLLLLTMYQWWRDIIREGT). The Mitochondrial matrix segment spans residues 67–72 (FQGHHT). Residues 73-105 (PPVQKGLRYGMILFITSEVFFFLGFFWAFYHAS) traverse the membrane as a helical segment. Over 106 to 128 (LAPTPELGGCWPPTGITTLDPFE) the chain is Mitochondrial intermembrane. The chain crosses the membrane as a helical span at residues 129–152 (VPLLNTAVLLASGVTVTWAHHSIM). Residues 153-155 (EGE) are Mitochondrial matrix-facing. The chain crosses the membrane as a helical span at residues 156 to 183 (RKQAIHSLTLTILLGFYFTFLQGLEYYD). The Mitochondrial intermembrane segment spans residues 184–190 (APFTIAD). The helical transmembrane segment at 191–223 (GVYGSTFFVATGFHGLHVIIGSTFLAVCLLRQI) threads the bilayer. At 224–232 (RYHFTSEHH) the chain is on the mitochondrial matrix side. A helical membrane pass occupies residues 233–256 (FGFEAAAWYWHFVDVVWLFLYISI). The Mitochondrial intermembrane segment spans residues 257–261 (YWWGS).

Belongs to the cytochrome c oxidase subunit 3 family. Component of the cytochrome c oxidase (complex IV, CIV), a multisubunit enzyme composed of 14 subunits. The complex is composed of a catalytic core of 3 subunits MT-CO1, MT-CO2 and MT-CO3, encoded in the mitochondrial DNA, and 11 supernumerary subunits COX4I, COX5A, COX5B, COX6A, COX6B, COX6C, COX7A, COX7B, COX7C, COX8 and NDUFA4, which are encoded in the nuclear genome. The complex exists as a monomer or a dimer and forms supercomplexes (SCs) in the inner mitochondrial membrane with NADH-ubiquinone oxidoreductase (complex I, CI) and ubiquinol-cytochrome c oxidoreductase (cytochrome b-c1 complex, complex III, CIII), resulting in different assemblies (supercomplex SCI(1)III(2)IV(1) and megacomplex MCI(2)III(2)IV(2)).

Its subcellular location is the mitochondrion inner membrane. It catalyses the reaction 4 Fe(II)-[cytochrome c] + O2 + 8 H(+)(in) = 4 Fe(III)-[cytochrome c] + 2 H2O + 4 H(+)(out). Its function is as follows. Component of the cytochrome c oxidase, the last enzyme in the mitochondrial electron transport chain which drives oxidative phosphorylation. The respiratory chain contains 3 multisubunit complexes succinate dehydrogenase (complex II, CII), ubiquinol-cytochrome c oxidoreductase (cytochrome b-c1 complex, complex III, CIII) and cytochrome c oxidase (complex IV, CIV), that cooperate to transfer electrons derived from NADH and succinate to molecular oxygen, creating an electrochemical gradient over the inner membrane that drives transmembrane transport and the ATP synthase. Cytochrome c oxidase is the component of the respiratory chain that catalyzes the reduction of oxygen to water. Electrons originating from reduced cytochrome c in the intermembrane space (IMS) are transferred via the dinuclear copper A center (CU(A)) of subunit 2 and heme A of subunit 1 to the active site in subunit 1, a binuclear center (BNC) formed by heme A3 and copper B (CU(B)). The BNC reduces molecular oxygen to 2 water molecules using 4 electrons from cytochrome c in the IMS and 4 protons from the mitochondrial matrix. In Gadus morhua (Atlantic cod), this protein is Cytochrome c oxidase subunit 3 (mt-co3).